The primary structure comprises 396 residues: 8-amino-7-oxononanoate synthase (396 aa).

Arg21 provides a ligand contact to substrate. 108–109 provides a ligand contact to pyridoxal 5'-phosphate; it reads GY. His133 provides a ligand contact to substrate. 3 residues coordinate pyridoxal 5'-phosphate: Ser179, His207, and Thr236. Lys239 is modified (N6-(pyridoxal phosphate)lysine). Residue Thr353 coordinates substrate.

This sequence belongs to the class-II pyridoxal-phosphate-dependent aminotransferase family. BioF subfamily. As to quaternary structure, homodimer. It depends on pyridoxal 5'-phosphate as a cofactor.

The catalysed reaction is 6-carboxyhexanoyl-[ACP] + L-alanine + H(+) = (8S)-8-amino-7-oxononanoate + holo-[ACP] + CO2. It functions in the pathway cofactor biosynthesis; biotin biosynthesis. Functionally, catalyzes the decarboxylative condensation of pimeloyl-[acyl-carrier protein] and L-alanine to produce 8-amino-7-oxononanoate (AON), [acyl-carrier protein], and carbon dioxide. In Hahella chejuensis (strain KCTC 2396), this protein is 8-amino-7-oxononanoate synthase.